Consider the following 156-residue polypeptide: SsrA-binding protein (156 aa).

Basic and acidic residues predominate over residues 135–150 (KRDTIKDREWQRDRSR). A disordered region spans residues 135 to 156 (KRDTIKDREWQRDRSRIMKKNT).

The protein belongs to the SmpB family.

It is found in the cytoplasm. In terms of biological role, required for rescue of stalled ribosomes mediated by trans-translation. Binds to transfer-messenger RNA (tmRNA), required for stable association of tmRNA with ribosomes. tmRNA and SmpB together mimic tRNA shape, replacing the anticodon stem-loop with SmpB. tmRNA is encoded by the ssrA gene; the 2 termini fold to resemble tRNA(Ala) and it encodes a 'tag peptide', a short internal open reading frame. During trans-translation Ala-aminoacylated tmRNA acts like a tRNA, entering the A-site of stalled ribosomes, displacing the stalled mRNA. The ribosome then switches to translate the ORF on the tmRNA; the nascent peptide is terminated with the 'tag peptide' encoded by the tmRNA and targeted for degradation. The ribosome is freed to recommence translation, which seems to be the essential function of trans-translation. The sequence is that of SsrA-binding protein from Legionella pneumophila (strain Paris).